The following is a 498-amino-acid chain: Polyphosphate:AMP phosphotransferase (498 aa).

2 PPK2 regions span residues 11–234 and 269–491; these read IDDD…MQAA and LSKE…LEKA.

The protein belongs to the polyphosphate kinase 2 (PPK2) family. Class II subfamily.

The catalysed reaction is [phosphate](n) + ADP = [phosphate](n+1) + AMP. Uses inorganic polyphosphate (polyP) as a donor to convert AMP to ADP. Can also convert GMP to GDP, with lower efficiency. The polypeptide is Polyphosphate:AMP phosphotransferase (Pseudomonas syringae pv. tomato (strain ATCC BAA-871 / DC3000)).